The following is a 107-amino-acid chain: Phosphoribosyl-ATP pyrophosphatase (107 aa).

This sequence belongs to the PRA-PH family.

The protein resides in the cytoplasm. The catalysed reaction is 1-(5-phospho-beta-D-ribosyl)-ATP + H2O = 1-(5-phospho-beta-D-ribosyl)-5'-AMP + diphosphate + H(+). It functions in the pathway amino-acid biosynthesis; L-histidine biosynthesis; L-histidine from 5-phospho-alpha-D-ribose 1-diphosphate: step 2/9. This chain is Phosphoribosyl-ATP pyrophosphatase, found in Caulobacter sp. (strain K31).